A 237-amino-acid chain; its full sequence is Uridylate kinase (237 aa).

9–12 (KFSG) provides a ligand contact to ATP. The tract at residues 17–22 (GEAGYG) is involved in allosteric activation by GTP. UMP is bound at residue Gly-51. ATP is bound by residues Gly-52 and Arg-56. UMP is bound by residues Asp-72 and 133-140 (TGNPFFTT). Residues Thr-160, Tyr-166, and Asp-169 each contribute to the ATP site.

It belongs to the UMP kinase family. As to quaternary structure, homohexamer.

It localises to the cytoplasm. It carries out the reaction UMP + ATP = UDP + ADP. It participates in pyrimidine metabolism; CTP biosynthesis via de novo pathway; UDP from UMP (UMPK route): step 1/1. With respect to regulation, allosterically activated by GTP. Inhibited by UTP. In terms of biological role, catalyzes the reversible phosphorylation of UMP to UDP. The protein is Uridylate kinase of Sulfurimonas denitrificans (strain ATCC 33889 / DSM 1251) (Thiomicrospira denitrificans (strain ATCC 33889 / DSM 1251)).